The sequence spans 863 residues: Oleate activated transcription factor 3 (863 aa).

A DNA-binding region (zn(2)-C6 fungal-type) is located at residues 18 to 47; it reads VCTNCKKRKSKCDRTKPCGTCVRLGDVDSC. The segment covering 52–63 has biased composition (polar residues); it reads DSSGQPESSPSL. The disordered stretch occupies residues 52 to 99; that stretch reads DSSGQPESSPSLNDADPLRKQSTPAERISPGFIKKRRSSQTRQDEDHW.

The protein belongs to the OAF3 family.

The protein localises to the cytoplasm. The protein resides in the nucleus. It localises to the mitochondrion. Functionally, transcriptional inhibitor with a significantly increased number of target genes in response to oleate. The polypeptide is Oleate activated transcription factor 3 (OAF3) (Saccharomyces cerevisiae (strain ATCC 204508 / S288c) (Baker's yeast)).